The sequence spans 290 residues: S-methyl-5'-thioadenosine phosphorylase 2 (290 aa).

Phosphate contacts are provided by residues Ser-14, 57-58 (RH), and 90-91 (SA). Met-185 serves as a coordination point for substrate. Residue Ser-186 participates in phosphate binding. 209 to 211 (DYD) is a substrate binding site.

Belongs to the PNP/MTAP phosphorylase family. MTAP subfamily. In terms of assembly, homotrimer.

The protein resides in the cytoplasm. The protein localises to the nucleus. It catalyses the reaction S-methyl-5'-thioadenosine + phosphate = 5-(methylsulfanyl)-alpha-D-ribose 1-phosphate + adenine. It functions in the pathway amino-acid biosynthesis; L-methionine biosynthesis via salvage pathway; S-methyl-5-thio-alpha-D-ribose 1-phosphate from S-methyl-5'-thioadenosine (phosphorylase route): step 1/1. In terms of biological role, catalyzes the reversible phosphorylation of S-methyl-5'-thioadenosine (MTA) to adenine and 5-methylthioribose-1-phosphate. Involved in the breakdown of MTA, a major by-product of polyamine biosynthesis. Responsible for the first step in the methionine salvage pathway after MTA has been generated from S-adenosylmethionine. Has broad substrate specificity with 6-aminopurine nucleosides as preferred substrates. The sequence is that of S-methyl-5'-thioadenosine phosphorylase 2 from Puccinia graminis f. sp. tritici (strain CRL 75-36-700-3 / race SCCL) (Black stem rust fungus).